We begin with the raw amino-acid sequence, 241 residues long: Probable xyloglucan-specific endo-beta-1,4-glucanase A (241 aa).

Residues 1 to 15 (MKVLALSALLSLASA) form the signal peptide. The N-linked (GlcNAc...) asparagine glycan is linked to asparagine 47.

The protein belongs to the glycosyl hydrolase 12 (cellulase H) family.

Its subcellular location is the secreted. The enzyme catalyses xyloglucan + H2O = xyloglucan oligosaccharides.. In terms of biological role, catalyzes endohydrolysis of 1,4-beta-D-glucosidic linkages in xyloglucan with retention of the beta-configuration of the glycosyl residues. Specific for xyloglucan and does not hydrolyze other cell wall components. This chain is Probable xyloglucan-specific endo-beta-1,4-glucanase A (xgeA), found in Aspergillus niger (strain ATCC MYA-4892 / CBS 513.88 / FGSC A1513).